Here is a 51-residue protein sequence, read N- to C-terminus: MAGNKPLGKKIRLAKALKQNRRVPMFAIARTKGSVKQHPKMRHWRRKNLKK.

The segment at 32–51 (KGSVKQHPKMRHWRRKNLKK) is disordered. A compositionally biased stretch (basic residues) spans 33-51 (GSVKQHPKMRHWRRKNLKK).

It belongs to the eukaryotic ribosomal protein eL39 family.

The chain is Large ribosomal subunit protein eL39 from Methanococcus maripaludis (strain C5 / ATCC BAA-1333).